The sequence spans 1214 residues: Peregrin (1214 aa).

The C2H2-type zinc-finger motif lies at 21–47 (YECPVETCRKVYKSYSGIEYHLYHYDH). Disordered stretches follow at residues 43–87 (YHYD…SPGR) and 118–177 (VVSE…PKLP). Residues 58–67 (LRKHKKKGRQ) are compositionally biased toward basic residues. Residues 59-222 (RKHKKKGRQS…VEYDMDEEDY (164 aa)) are interaction with KAT6A and KAT6B. Low complexity predominate over residues 74-85 (QSPSPSEVSQSP). The segment covering 119–130 (VSEDEEAPEEAP) has biased composition (acidic residues). A Phosphoserine modification is found at S120. The residue at position 147 (K147) is an N6-acetyllysine. Basic residues predominate over residues 148-167 (SGKHKNKEKRKDSNHHHHHN). Residue S238 is modified to Phosphoserine. The segment at 273–323 (DAVCCICNDGECQNSNVILFCDMCNLAVHQECYGVPYIPEGQWLCRRCLQS) adopts a PHD-type 1 zinc-finger fold. The segment at 327–360 (AVDCALCPNKGGAFKQTDDGRWAHVVCALWIPEV) adopts a C2HC pre-PHD-type zinc-finger fold. The segment at 384–448 (LTCYICKQRG…RKTAYCDIHT (65 aa)) adopts a PHD-type 2 zinc-finger fold. The disordered stretch occupies residues 448-489 (TPPGSARRLPALSHSEGEEDEDEEEDEGKGWSSEKVKKAKAK). Residues S460 and S462 each carry the phosphoserine modification. Positions 464–474 (GEEDEDEEEDE) are enriched in acidic residues. Residues 501–821 (LAEKRAAAPV…IKKEMTALRR (321 aa)) are interaction with MEAF6 and ING5. Residues 543–1079 (YWTLKRQSRN…RGAGWLSEDE (537 aa)) form a required for RUNX1 and RUNX2 transcriptional activation region. K580 is subject to N6-acetyllysine. Residues 628 to 732 (MQLTPFLILL…EQGGAVLRQA (105 aa)) form the Bromo domain. The segment at 819 to 1062 (LRRKLAHQRE…VGTGRGVGHS (244 aa)) is disordered. Residues 825-838 (HQRETGRDGPERHG) show a composition bias toward basic and acidic residues. T858 is modified (phosphothreonine). Residues 858–871 (TDSAAEESSSQETS) are compositionally biased toward low complexity. 4 positions are modified to phosphoserine: S860, S917, S922, and S926. Residues 993–1021 (SLPRSSSDSESSSSSSSSAASDRTSTTPS) are compositionally biased toward low complexity. S1076 bears the Phosphoserine mark. The PWWP domain occupies 1085-1168 (ALDLVWAKCR…RTKLVPLGVN (84 aa)). At S1187 the chain carries Phosphoserine.

In terms of assembly, component of some HBO1 complex composed of KAT7/HBO1, MEAF6, ING5, and BRPF1. Component of the MOZ/MORF complex composed at least of ING5, KAT6A, KAT6B, MEAF6 and one of BRPF1, BRD1/BRPF2 and BRPF3. Interacts (via PHD-type zinc finger domains) with unmethylated histone H3 at 'Lys-4' (H3K4me0). Interacts with trimethylated 'Lys-36' of histone H3 (H3K36me3). Interacts with ING5; interaction directs BRPF1 to H4K4me3-enriched chromatin at the 5' of active genes. Interacts with KAT7. Acetylated by KAT6A. As to expression, high levels in testis.

It is found in the nucleus. Its subcellular location is the chromosome. The protein localises to the cytoplasm. Scaffold subunit of various histone acetyltransferase (HAT) complexes, such as the MOZ/MORF and HBO1 complexes, which have a histone H3 acetyltransferase activity. Plays a key role in HBO1 complex by directing KAT7/HBO1 specificity towards histone H3 'Lys-14' acetylation (H3K14ac). Some HAT complexes preferentially mediate histone H3 'Lys-23' (H3K23ac) acetylation. Positively regulates the transcription of RUNX1 and RUNX2. The sequence is that of Peregrin from Homo sapiens (Human).